Here is a 121-residue protein sequence, read N- to C-terminus: Large ribosomal subunit protein uL18 (121 aa).

It belongs to the universal ribosomal protein uL18 family. As to quaternary structure, part of the 50S ribosomal subunit; part of the 5S rRNA/L5/L18/L25 subcomplex. Contacts the 5S and 23S rRNAs.

In terms of biological role, this is one of the proteins that bind and probably mediate the attachment of the 5S RNA into the large ribosomal subunit, where it forms part of the central protuberance. The protein is Large ribosomal subunit protein uL18 of Herpetosiphon aurantiacus (strain ATCC 23779 / DSM 785 / 114-95).